We begin with the raw amino-acid sequence, 297 residues long: Succinate dehydrogenase [ubiquinone] iron-sulfur subunit, mitochondrial (297 aa).

Residues Thr-33 to Pro-55 form a disordered region. The 2Fe-2S ferredoxin-type domain occupies Asp-78 to Thr-157. [2Fe-2S] cluster-binding residues include Cys-117, Cys-122, Cys-125, and Cys-137. The 4Fe-4S ferredoxin-type domain maps to Asp-199–Tyr-229. [4Fe-4S] cluster-binding residues include Cys-209, Cys-212, and Cys-215. Cys-219 serves as a coordination point for [3Fe-4S] cluster. Position 224 (Trp-224) interacts with a ubiquinone. Positions 266 and 272 each coordinate [3Fe-4S] cluster. Residue Cys-276 participates in [4Fe-4S] cluster binding.

Belongs to the succinate dehydrogenase/fumarate reductase iron-sulfur protein family. Component of complex II composed of four subunits: a flavoprotein (FP), an iron-sulfur protein (IP), and a cytochrome b composed of a large and a small subunit. [2Fe-2S] cluster serves as cofactor. The cofactor is [3Fe-4S] cluster. [4Fe-4S] cluster is required as a cofactor.

The protein localises to the mitochondrion inner membrane. The catalysed reaction is a quinone + succinate = fumarate + a quinol. Its pathway is carbohydrate metabolism; tricarboxylic acid cycle; fumarate from succinate (eukaryal route): step 1/1. In terms of biological role, iron-sulfur protein (IP) subunit of succinate dehydrogenase (SDH) that is involved in complex II of the mitochondrial electron transport chain and is responsible for transferring electrons from succinate to ubiquinone (coenzyme Q). The chain is Succinate dehydrogenase [ubiquinone] iron-sulfur subunit, mitochondrial (SDH2) from Zymoseptoria tritici (Speckled leaf blotch fungus).